The following is a 708-amino-acid chain: Caprin-1 (708 aa).

Low complexity-rich tracts occupy residues 1 to 15 and 22 to 37; these read MPSATSHSGSGSKSS and GSSGNEAGAGAAAPAS. Residues 1–48 form a disordered region; sequence MPSATSHSGSGSKSSGPPPPSGSSGNEAGAGAAAPASQHPMTGTGAVQ. Proline 2 is subject to N-acetylproline. Serine 10 is subject to Phosphoserine. Residues 58–92 adopt a coiled-coil conformation; that stretch reads VIDKKLRNLEKKKGKLDDYQERMNKGERLNQDQLD. Phosphoserine is present on serine 113. A coiled-coil region spans residues 123 to 151; that stretch reads KTIKKTARREQLMREEAEQKRLKTVLELQ. Omega-N-methylarginine is present on arginine 163. The tract at residues 258–287 is disordered; it reads EEAASAPTVEDQAAEAEPEPVEEYTEQNEV. Acidic residues predominate over residues 269-287; the sequence is QAAEAEPEPVEEYTEQNEV. 2 positions are modified to phosphoserine: serine 333 and serine 341. Residues 358-379 form a G3BP1-binding region; the sequence is QDLMAQMQGPYNFIQDSMLDFE. Residues 415 to 452 show a composition bias toward polar residues; that stretch reads LAQPNQVSVQPEATQVPLVSSTSEGYTASQPLYQPSHA. Disordered regions lie at residues 415–459, 473–497, 521–559, and 571–708; these read LAQP…RPQK, TDQTTASSSLPAASQPQVFQAGTSK, NAPVPPVNEPETLKQQNQYQASYNQSFSSQPHQVEQTEL, and YHGS…QQVN. Composition is skewed to low complexity over residues 475 to 489 and 535 to 559; these read QTTASSSLPAASQPQ and QQNQYQASYNQSFSSQPHQVEQTEL. The segment covering 572–603 has biased composition (polar residues); that stretch reads HGSQDQPHQVTGNHQQPPQQNTGFPRSNQPYY. Residue tyrosine 623 is modified to Phosphotyrosine. An omega-N-methylarginine mark is found at arginine 624 and arginine 631. 2 positions are modified to phosphotyrosine: tyrosine 634 and tyrosine 637. Arginine 638 is subject to Omega-N-methylarginine. Positions 640-656 are enriched in polar residues; it reads SFSTNTPNSGYTQSQFS. 2 O-linked (GlcNAc) serine glycosylation sites follow: serine 642 and serine 648. Phosphotyrosine occurs at positions 650, 661, 664, and 669. Low complexity-rich tracts occupy residues 675–685 and 696–708; these read RGSGQSGPRGA and NRGMPQMNTQQVN. Arginine 697 carries the post-translational modification Asymmetric dimethylarginine; alternate. The residue at position 697 (arginine 697) is an Omega-N-methylarginine; alternate.

The protein belongs to the caprin family. In terms of assembly, may form homomultimers. Interacts with G3BP1; interaction is direct and promotes stress granule formation. Interacts with G3BP2; interaction is direct and promotes stress granule formation. Interacts with PQBP1. Interacts with DDX3X. Interacts (when phosphorylated by EPHA4) with FMR1; interaction with FMR1 promotes formation of a membraneless compartment. Post-translationally, tyrosine phosphorylation by EPHA4 promotes interaction with FMR1 and liquid-liquid phase separation (LLPS) for the formation of a membraneless compartment that concentrates mRNAs with associated regulatory factors. O-glycosylated (O-GlcNAcylated), in a cell cycle-dependent manner. O-glycosylation by OGT inhibit ability to undergo liquid-liquid phase separation (LLPS).

It is found in the cytoplasm. Its subcellular location is the cytoplasmic ribonucleoprotein granule. It localises to the cytosol. The protein resides in the cell projection. The protein localises to the dendrite. It is found in the lamellipodium. Its activity is regulated as follows. Ability to mediate liquid-liquid phase separation is regulated by ATP: moderate concentrations of ATP enhance phase separation, whereas high concentrations of ATP lead to inhibition of phase separation. Its function is as follows. mRNA-binding protein that acts as a regulator of mRNAs transport, translation and/or stability, and which is involved in neurogenesis, synaptic plasticity in neurons and cell proliferation and migration in multiple cell types. Plays an essential role in cytoplasmic stress granule formation. Acts as an mRNA regulator by mediating formation of some phase-separated membraneless compartment: undergoes liquid-liquid phase separation upon binding to target mRNAs, leading to assemble mRNAs into cytoplasmic ribonucleoprotein granules that concentrate mRNAs with associated regulatory factors. Undergoes liquid-liquid phase separation following phosphorylation and interaction with FMR1, promoting formation of cytoplasmic ribonucleoprotein granules that concentrate mRNAs with factors that inhibit translation and mediate deadenylation of target mRNAs. In these cytoplasmic ribonucleoprotein granules, CAPRIN1 mediates recruitment of CNOT7 deadenylase, leading to mRNA deadenylation and degradation. Binds directly and selectively to MYC and CCND2 mRNAs. In neuronal cells, directly binds to several mRNAs associated with RNA granules, including BDNF, CAMK2A, CREB1, MAP2, NTRK2 mRNAs, as well as to GRIN1 and KPNB1 mRNAs, but not to rRNAs. This is Caprin-1 (CAPRIN1) from Bos taurus (Bovine).